Reading from the N-terminus, the 433-residue chain is 3-phosphoshikimate 1-carboxyvinyltransferase (433 aa).

3-phosphoshikimate-binding residues include lysine 23, serine 24, and arginine 28. Lysine 23 is a binding site for phosphoenolpyruvate. Phosphoenolpyruvate is bound by residues glycine 93 and arginine 121. Residues serine 167, glutamine 169, aspartate 318, and lysine 345 each contribute to the 3-phosphoshikimate site. A phosphoenolpyruvate-binding site is contributed by glutamine 169. Aspartate 318 acts as the Proton acceptor in catalysis. 2 residues coordinate phosphoenolpyruvate: arginine 349 and arginine 390.

This sequence belongs to the EPSP synthase family. Monomer.

It is found in the cytoplasm. The enzyme catalyses 3-phosphoshikimate + phosphoenolpyruvate = 5-O-(1-carboxyvinyl)-3-phosphoshikimate + phosphate. Its pathway is metabolic intermediate biosynthesis; chorismate biosynthesis; chorismate from D-erythrose 4-phosphate and phosphoenolpyruvate: step 6/7. In terms of biological role, catalyzes the transfer of the enolpyruvyl moiety of phosphoenolpyruvate (PEP) to the 5-hydroxyl of shikimate-3-phosphate (S3P) to produce enolpyruvyl shikimate-3-phosphate and inorganic phosphate. The sequence is that of 3-phosphoshikimate 1-carboxyvinyltransferase from Nitratiruptor sp. (strain SB155-2).